A 600-amino-acid chain; its full sequence is MSASPKNEMWVVFKRLMAYVVPMKAMFIMAVLGLITYGAVDAAFIAFIKPFIDEGFSQTPAIVAGVDLPTHGGFNANKDIMLMAPIAVILMFSLRGVANFVSTYCVSYMSAQLIMDMRQQVFEHYLRLPVSYIDRENSGNLISRVTFDTEQIARASGSALISIVRDSMTAIGMLGIMFYYSWKLSLCILVIGPIMGVVISVVSKRFRKVSKQIQSAMGGVTATTEQMIKGHKNVLVFGGQKTEVERFFQVNDRNRYQNMKLAVAQSISQPLIMVIGSFALAFVLYAATWDSMKTDLTAGTFAAILGAMLAMLQPIKNLTRVNAEFQRGIAACTTVFELLDTAPEPDNGVFSIDRVEGKLAFDNVTFAYPGQEKSALNGINFEVKPGKTVALVGRSGSGKSTIASLITRFYGDLSTGDIRLDDTSIYDYQLKSLRNQVALVSQQVTLFNDTIANNIAYAYPGEVTREQIVHAAELAYAMEFIDTLPEGLDTQVGENGVLLSGGQRQRIAIARAMLRDAPVLILDEATSALDTESEKAIQKGLDNLRHNRTSIVIAHRLSTIESADEILVIDQGKIVERGNHSELIAQAGIYANLYQMQFSQ.

5 consecutive transmembrane segments (helical) span residues 28–48 (IMAVLGLITYGAVDAAFIAFI), 80–100 (IMLMAPIAVILMFSLRGVANF), 182–202 (WKLSLCILVIGPIMGVVISVV), 267–287 (ISQPLIMVIGSFALAFVLYAA), and 295–315 (DLTAGTFAAILGAMLAMLQPI). The ABC transmembrane type-1 domain occupies 28–327 (IMAVLGLITY…LTRVNAEFQR (300 aa)). One can recognise an ABC transporter domain in the interval 359 to 596 (LAFDNVTFAY…AGIYANLYQM (238 aa)). ATP is bound at residue 393–400 (GRSGSGKS).

The protein belongs to the ABC transporter superfamily. Lipid exporter (TC 3.A.1.106) family. Homodimer.

The protein resides in the cell inner membrane. It catalyses the reaction ATP + H2O + lipid A-core oligosaccharideSide 1 = ADP + phosphate + lipid A-core oligosaccharideSide 2.. In terms of biological role, involved in lipopolysaccharide (LPS) biosynthesis. Translocates lipid A-core from the inner to the outer leaflet of the inner membrane. Transmembrane domains (TMD) form a pore in the inner membrane and the ATP-binding domain (NBD) is responsible for energy generation. The chain is ATP-dependent lipid A-core flippase from Shewanella frigidimarina (strain NCIMB 400).